Consider the following 108-residue polypeptide: Phosphoribosyl-ATP pyrophosphatase (108 aa).

Belongs to the PRA-PH family.

Its subcellular location is the cytoplasm. The enzyme catalyses 1-(5-phospho-beta-D-ribosyl)-ATP + H2O = 1-(5-phospho-beta-D-ribosyl)-5'-AMP + diphosphate + H(+). It functions in the pathway amino-acid biosynthesis; L-histidine biosynthesis; L-histidine from 5-phospho-alpha-D-ribose 1-diphosphate: step 2/9. This is Phosphoribosyl-ATP pyrophosphatase from Chromobacterium violaceum (strain ATCC 12472 / DSM 30191 / JCM 1249 / CCUG 213 / NBRC 12614 / NCIMB 9131 / NCTC 9757 / MK).